The primary structure comprises 321 residues: MRVSVANHLGEDAGHLALRRDVYSGLQKTPKSLPPKWFYDTVGSELFDQITRLPEYYPTRAEAEILRARSAEVASACRADTLVELGSGTSEKTRMLLDALRHRGSLRRFVPFDVDASVLSATATAIQREYSGVEINAVCGDFEEHLTEIPRGGRRLFVFLGSTIGNLTPGPRAQFLTALAGVMRPGDSLLLGTDLVKDAARLVRAYDDPGGVTAQFNRNVLAVINRELEADFDVDAFQHVARWNSAEERIEMWLRADGRQRVRVGALDLTVDFDAGEEMLTEVSCKFRPQAVGAELAAAGLHRIRWWTDEAGDFGLSLAAK.

An L-histidine-binding site is contributed by Tyr-56. S-adenosyl-L-methionine-binding positions include Gly-86, Lys-92, Asp-113, and 141-142 (DF). Residues Asn-166, Tyr-206, and 282–284 (EVS) each bind L-histidine.

It belongs to the methyltransferase superfamily. EgtD family. As to quaternary structure, monomer.

It carries out the reaction L-histidine + 3 S-adenosyl-L-methionine = hercynine + 3 S-adenosyl-L-homocysteine + 3 H(+). It participates in amino-acid biosynthesis; ergothioneine biosynthesis. Catalyzes the SAM-dependent triple methylation of the alpha-amino group of histidine to form hercynine, a step in the biosynthesis pathway of ergothioneine (ERG). ERG is one of the major redox buffers which protects bacteria against redox stressors and antibiotics; loss of ERG or mycothiol (MSH, the other major redox buffer in this bacteria) leads to respiratory alterations and bioenergetic deficiencies that negatively impact virulence. The sequence is that of Histidine N-alpha-methyltransferase (egtD) from Mycobacterium tuberculosis (strain CDC 1551 / Oshkosh).